The following is a 146-amino-acid chain: ALSAAEAEVVAKSWGPVFANKDANGDNFLIALFEAYPDSPNFFADFKGKSIADIRASPKLRNVSSRIVSRLNEFVSSAADAGKMAAMLDQFSKEHAGFGVGSQQFQNVSAMFPGFVASIAAPPAGADAAWGKLFGLIIDAMKKAGK.

N-acetylalanine is present on Ala-1. The Globin domain occupies 1 to 146; the sequence is ALSAAEAEVV…IIDAMKKAGK (146 aa). Position 95 (His-95) interacts with heme b.

It belongs to the globin family. In terms of assembly, monomer.

The protein is Globin of Dolabella auricularia (Shoulderblade sea cat).